Consider the following 67-residue polypeptide: Conotoxin LiC33 (67 aa).

The first 22 residues, 1–22 (MRCVPVFIILLLLSPSAPSVDA), serve as a signal peptide directing secretion. Positions 23-48 (HPKTKDDVPLASFHDDAKRTLQRLWI) are excised as a propeptide. Phenylalanine amide is present on F63. Positions 65-67 (KGK) are excised as a propeptide.

This sequence belongs to the conotoxin T superfamily. In terms of processing, contains 2 disulfide bonds that can be either 'C1-C3, C2-C4' or 'C1-C4, C2-C3', since these disulfide connectivities have been observed for conotoxins with cysteine framework V (for examples, see AC P0DQQ7 and AC P81755). Expressed by the venom duct.

It is found in the secreted. The sequence is that of Conotoxin LiC33 from Conus lividus (Livid cone).